A 106-amino-acid chain; its full sequence is Phosphoribosyl-ATP pyrophosphatase (106 aa).

The protein belongs to the PRA-PH family.

Its subcellular location is the cytoplasm. The enzyme catalyses 1-(5-phospho-beta-D-ribosyl)-ATP + H2O = 1-(5-phospho-beta-D-ribosyl)-5'-AMP + diphosphate + H(+). The protein operates within amino-acid biosynthesis; L-histidine biosynthesis; L-histidine from 5-phospho-alpha-D-ribose 1-diphosphate: step 2/9. The sequence is that of Phosphoribosyl-ATP pyrophosphatase from Geotalea daltonii (strain DSM 22248 / JCM 15807 / FRC-32) (Geobacter daltonii).